Consider the following 216-residue polypeptide: ATP phosphoribosyltransferase (216 aa).

The protein belongs to the ATP phosphoribosyltransferase family. Short subfamily. In terms of assembly, heteromultimer composed of HisG and HisZ subunits.

It is found in the cytoplasm. The catalysed reaction is 1-(5-phospho-beta-D-ribosyl)-ATP + diphosphate = 5-phospho-alpha-D-ribose 1-diphosphate + ATP. Its pathway is amino-acid biosynthesis; L-histidine biosynthesis; L-histidine from 5-phospho-alpha-D-ribose 1-diphosphate: step 1/9. Catalyzes the condensation of ATP and 5-phosphoribose 1-diphosphate to form N'-(5'-phosphoribosyl)-ATP (PR-ATP). Has a crucial role in the pathway because the rate of histidine biosynthesis seems to be controlled primarily by regulation of HisG enzymatic activity. This Rubrobacter xylanophilus (strain DSM 9941 / JCM 11954 / NBRC 16129 / PRD-1) protein is ATP phosphoribosyltransferase.